Consider the following 335-residue polypeptide: Methionine import ATP-binding protein MetN 1 (335 aa).

Positions 2–242 (IEFHNVHKTY…PQHPTTRRFV (241 aa)) constitute an ABC transporter domain. Position 38 to 45 (38 to 45 (GHSGAGKS)) interacts with ATP.

This sequence belongs to the ABC transporter superfamily. Methionine importer (TC 3.A.1.24) family. As to quaternary structure, the complex is composed of two ATP-binding proteins (MetN), two transmembrane proteins (MetI) and a solute-binding protein (MetQ).

It localises to the cell inner membrane. The enzyme catalyses L-methionine(out) + ATP + H2O = L-methionine(in) + ADP + phosphate + H(+). It carries out the reaction D-methionine(out) + ATP + H2O = D-methionine(in) + ADP + phosphate + H(+). Its function is as follows. Part of the ABC transporter complex MetNIQ involved in methionine import. Responsible for energy coupling to the transport system. This is Methionine import ATP-binding protein MetN 1 from Pseudomonas savastanoi pv. phaseolicola (strain 1448A / Race 6) (Pseudomonas syringae pv. phaseolicola (strain 1448A / Race 6)).